A 192-amino-acid chain; its full sequence is Molybdenum cofactor guanylyltransferase (192 aa).

Residues 10 to 12 (LAG), K23, N51, D69, and D99 contribute to the GTP site. D99 lines the Mg(2+) pocket.

This sequence belongs to the MobA family. In terms of assembly, monomer. It depends on Mg(2+) as a cofactor.

It localises to the cytoplasm. It carries out the reaction Mo-molybdopterin + GTP + H(+) = Mo-molybdopterin guanine dinucleotide + diphosphate. In terms of biological role, transfers a GMP moiety from GTP to Mo-molybdopterin (Mo-MPT) cofactor (Moco or molybdenum cofactor) to form Mo-molybdopterin guanine dinucleotide (Mo-MGD) cofactor. In Haemophilus influenzae (strain ATCC 51907 / DSM 11121 / KW20 / Rd), this protein is Molybdenum cofactor guanylyltransferase.